Consider the following 298-residue polypeptide: Glyoxalase domain-containing protein 4 (298 aa).

Residues 5-130 enclose the VOC 1 domain; sequence RALHFVFKVG…GGYKFYLQDR (126 aa). An N6-succinyllysine modification is found at Lys109. Ser131 carries the post-translational modification Phosphoserine. The region spanning 137 to 258 is the VOC 2 domain; it reads PVLKVTLAVS…DGHEICFVGD (122 aa). The residue at position 273 (Lys273) is an N6-succinyllysine.

This sequence belongs to the glyoxalase I family. Interacts with NUDT9.

It localises to the mitochondrion. In Rattus norvegicus (Rat), this protein is Glyoxalase domain-containing protein 4 (Glod4).